A 78-amino-acid polypeptide reads, in one-letter code: uncharacterized protein (78 aa).

2 helical membrane passes run 7-27 (ICLV…FFQF) and 41-61 (LSRI…GLLF).

Its subcellular location is the cell membrane. This is an uncharacterized protein from Bacillus subtilis (strain 168).